Consider the following 609-residue polypeptide: UvrABC system protein C (609 aa).

Residues 16–94 enclose the GIY-YIG domain; it reads HLPGVYRHLD…IKSLRPRYNI (79 aa). In terms of domain architecture, UVR spans 203–238; sequence REVMDEIEARMLQASTELRFEEAAVLRDQMGSLSKV.

This sequence belongs to the UvrC family. In terms of assembly, interacts with UvrB in an incision complex.

Its subcellular location is the cytoplasm. Functionally, the UvrABC repair system catalyzes the recognition and processing of DNA lesions. UvrC both incises the 5' and 3' sides of the lesion. The N-terminal half is responsible for the 3' incision and the C-terminal half is responsible for the 5' incision. This is UvrABC system protein C from Bordetella bronchiseptica (strain ATCC BAA-588 / NCTC 13252 / RB50) (Alcaligenes bronchisepticus).